The primary structure comprises 403 residues: Soluble calcium-activated nucleotidase 1 (403 aa).

Topologically, residues 1-44 (MPIQPFDQREWNEPMHSLRISVGGLPVLASMTKATDPRFRPRWR) are cytoplasmic. The helical; Signal-anchor for type II membrane protein transmembrane segment at 45 to 61 (VILTSFVGAALLWLLYS) threads the bilayer. Over 62–403 (HHQTPVSGRP…SVKYEGIEFI (342 aa)) the chain is Lumenal. An N-linked (GlcNAc...) asparagine glycan is attached at Asn-90. Residues Ser-170, Asp-171, Glu-217, Glu-286, Ser-347, and Glu-398 each contribute to the Ca(2+) site.

Belongs to the apyrase family. In terms of assembly, monomer. Homodimer; dimerization is Ca(2+)-dependent. It depends on Ca(2+) as a cofactor. Detected in intestine, thymus, heart, lung, spleen, kidney, liver, testis, skeletal muscle and brain.

It is found in the endoplasmic reticulum membrane. It localises to the golgi apparatus. The protein resides in the golgi stack membrane. It catalyses the reaction a ribonucleoside 5'-diphosphate + H2O = a ribonucleoside 5'-phosphate + phosphate + H(+). Functionally, calcium-dependent nucleotidase with a preference for UDP. The order of activity with different substrates is UDP &gt; GDP &gt; IDP &gt;&gt; UTP &gt; CDP = GTP = ITP. Has very low activity towards ADP and even lower activity towards ATP. Does not hydrolyze AMP and GMP. Involved in proteoglycan synthesis. The chain is Soluble calcium-activated nucleotidase 1 (Cant1) from Rattus norvegicus (Rat).